The sequence spans 607 residues: T-box transcription factor TBX18 (607 aa).

The Engrailed homology 1 repressor signature appears at 18 to 28 (HAFSVEALIGA). A disordered region spans residues 30–141 (KQQQLQKKRR…PLPSPQAPRV (112 aa)). A Nuclear localization signal motif is present at residues 36-40 (KKRRK). Positions 44–53 (EEAAGAVDDG) are enriched in low complexity. A DNA-binding region (T-box) is located at residues 143–330 (LQGAELWKRF…RNPFAKGFRD (188 aa)).

As to quaternary structure, homodimer. Can form a heterodimer with TBX15. Interacts with GATA4 and NKX2-5. Interacts with PAX3. Interacts (via engrailed homology 1 repressor motif) with TLE3; this interaction represses TBX18 transcriptional activity. Interacts with SIX1.

It is found in the nucleus. Acts as a transcriptional repressor involved in developmental processes of a variety of tissues and organs, including the heart and coronary vessels, the ureter and the vertebral column. Required for embryonic development of the sino atrial node (SAN) head area. The polypeptide is T-box transcription factor TBX18 (TBX18) (Homo sapiens (Human)).